The following is a 95-amino-acid chain: Small ribosomal subunit protein uS19 (95 aa).

Belongs to the universal ribosomal protein uS19 family.

Functionally, protein S19 forms a complex with S13 that binds strongly to the 16S ribosomal RNA. This Treponema pallidum (strain Nichols) protein is Small ribosomal subunit protein uS19 (rpsS).